A 365-amino-acid polypeptide reads, in one-letter code: Histidinol-phosphate aminotransferase 2 (365 aa).

Residue Lys222 is modified to N6-(pyridoxal phosphate)lysine.

The protein belongs to the class-II pyridoxal-phosphate-dependent aminotransferase family. Histidinol-phosphate aminotransferase subfamily. Homodimer. Pyridoxal 5'-phosphate serves as cofactor.

The enzyme catalyses L-histidinol phosphate + 2-oxoglutarate = 3-(imidazol-4-yl)-2-oxopropyl phosphate + L-glutamate. The protein operates within amino-acid biosynthesis; L-histidine biosynthesis; L-histidine from 5-phospho-alpha-D-ribose 1-diphosphate: step 7/9. The polypeptide is Histidinol-phosphate aminotransferase 2 (hisC2) (Bordetella bronchiseptica (strain ATCC BAA-588 / NCTC 13252 / RB50) (Alcaligenes bronchisepticus)).